The chain runs to 253 residues: Oxidoreductase AOL_s00215g277 (253 aa).

The chain crosses the membrane as a helical span at residues 181-203 (FFGYWLTVILGYYIGSLLGYQPF).

Belongs to the oxidoreductase OpS7 family.

The protein resides in the membrane. It participates in secondary metabolite biosynthesis; terpenoid biosynthesis. In terms of biological role, oxidoreductase; part of the gene cluster that mediates the biosynthesis of sesquiterpenyl epoxy-cyclohexenoids (SECs) such as anthrobotrisins and arthrosporols, metabolites that possess a novel hybrid carbon skeleton consisting of a polyketide-derived epoxycyclohexenol combined with a terpenoid-derived monocyclic sesquiterpenol substructure (PKS-PTS hybrid). The SEC pathway plays an important role for fungal soil colonization via decreasing fungal nematode-capturing ability. Within the pathway, the oxidoreductase AOL_s00215g277 seems to play a role in the farnesylation step of toluquinol to produce farnesyl hydroquinone, the hybrid precursor for biosynthesis of SECs. The pathway begins with the biosynthesis of 6-methylsalicylic acid (6-MSA), the first precursor of the polyketide-derived epoxycyclohexenol in arthrosporols, by the polyketide synthase (PKS) AOL_s00215g283 via condensation of 1 acetate and 3 malonate units. The 6-methylsalicylic acid decarboxylase AOL_s00215g281 then catalyzes the decarboxylation of 6-methylsalicylic acid to yield m-cresol. The cytochrome P450 monooxygenase AOL_s00215g282 further oxidizes m-cresol to yield toluquinol. With the assistance of the oxidoreductase AOL_s00215g277, the polyprenyl transferase AOL_s00215g276 catalyzes the farnesylation of toluquinol to produce farnesyl hydroquinone, the hybrid precursor for biosynthesis of SECs. Farnesyl hydroquinone undergoes epoxidation and then subsequent dehydrogenation to form farnesyl epoxy-quinone, the first and simplest SEC. The cytochrome P450 monooxygenase AOL_s00215g278 and the FAD-dependent monooxygenase AOL_s00215g279 might be involved in the oxygenation of the phenol moiety, most likely in the epoxy formation. The cytochrome P450 monooxygenases AOL_s00215g274 and AOL_s00215g280 are involved in specific regional ketone reductions at respectively C-4 and C-1 of farnesyl epoxy-quinone PubMed:33823587. The protein is Oxidoreductase AOL_s00215g277 of Arthrobotrys oligospora (strain ATCC 24927 / CBS 115.81 / DSM 1491) (Nematode-trapping fungus).